A 596-amino-acid chain; its full sequence is Probable protein phosphatase 2C 26 (596 aa).

Residues 122 to 154 form a disordered region; it reads SGPLDPAVPFSGPLPAKPPKPASSSSRGFSRRF. Positions 177-584 constitute a PPM-type phosphatase domain; that stretch reads LRRDDGVQWA…DDVTVMVISL (408 aa). Mn(2+) contacts are provided by D212, G213, D512, and D575.

This sequence belongs to the PP2C family. Requires Mg(2+) as cofactor. Mn(2+) serves as cofactor.

It catalyses the reaction O-phospho-L-seryl-[protein] + H2O = L-seryl-[protein] + phosphate. The enzyme catalyses O-phospho-L-threonyl-[protein] + H2O = L-threonyl-[protein] + phosphate. The polypeptide is Probable protein phosphatase 2C 26 (Oryza sativa subsp. japonica (Rice)).